Here is a 433-residue protein sequence, read N- to C-terminus: Steroid hormone receptor ERR2 (433 aa).

The tract at residues 1–41 (MSSEDRHLGSSCGSFIKTEPSSPSSGIDALSHHSPSGSSDA) is disordered. The span at 32–41 (HHSPSGSSDA) shows a compositional bias: low complexity. The interval 93–211 (YMLNAIPKRL…SPPAKKPLTK (119 aa)) is interaction with NANOG. The segment at residues 100–186 (KRLCLVCGDI…RVRGGRQKYK (87 aa)) is a DNA-binding region (nuclear receptor). NR C4-type zinc fingers lie at residues 103 to 123 (CLVCGDIASGYHYGVASCEAC) and 139 to 163 (CPATNECEITKRRRKSCQACRFMKC). The interval 203 to 433 (PPAKKPLTKI…LFLEMLEAKV (231 aa)) is essential for ESRRB transcriptional activity and interaction with NCOA3. Positions 208–432 (PLTKIVSYLL…KLFLEMLEAK (225 aa)) constitute an NR LBD domain.

This sequence belongs to the nuclear hormone receptor family. NR3 subfamily. In terms of assembly, binds DNA as a monomer. Interacts with NR0B1; represses ESRRB activity at the GATA6 promoter. Interacts with NANOG; reciprocally modulates their transcriptional activities and activates POU5F1 expression. Interacts with NCOA3; mediates the interaction between ESRRB and RNA polymerase II complexes and allows NCOA3 corecruitment to ESRRB, KLF4, NANOG, and SOX2 enhancer regions to trigger ESRRB-dependent gene activation involved in self-renewal and pluripotency. Interacts with KDM1A; co-occupes the core set of ESRRB targets including ELF5 and EOMES. Interacts with the multiprotein complex Integrator, at least composed of INTS1, INTS2, INTS3, INTS4, INTS5, INTS6, INTS7, INTS8, INTS9/RC74, INTS10, INTS11/CPSF3L and INTS12; ESRRB is probably not a core component of the integrator complex and associates to integrator via its interaction with INTS1 and INTS9; attracts the transcriptional machinery. Interacts with JARID2. Interacts with POU5F1; recruits ESRRB near the POU5F1-SOX2 element in the NANOG proximal promoter leading to activation of NANOG expression; the interaction is DNA independent. In terms of processing, acetylated by PCAF/KAT2 (in vitro).

The protein localises to the nucleus. The protein resides in the cytoplasm. It is found in the chromosome. Its function is as follows. Transcription factor that binds a canonical ESRRB recognition (ERRE) sequence 5'TCAAGGTCA-3' localized on promoter and enhancer of targets genes regulating their expression or their transcription activity. Plays a role, in a LIF independent manner, in maintainance of self-renewal and pluripotency of embryonic and trophoblast stem cells through different signaling pathways including FGF signaling pathway and Wnt signaling pathways. Involved in morula development (2-16 cells embryos) by acting as a regulator at the 8-cell stage. Upon FGF signaling pathway activation, interacts with KDM1A by directly binding to enhancer site of ELF5 and EOMES and activating their transcription leading to self-renewal of trophoblast stem cells. Also regulates expression of multiple rod-specific genes and is required for survival of this cell type. Plays a role as transcription factor activator of GATA6, NR0B1, POU5F1 and PERM1. Plays a role as transcription factor repressor of NFE2L2 transcriptional activity and ESR1 transcriptional activity. During mitosis remains bound to a subset of interphase target genes, including pluripotency regulators, through the canonical ESRRB recognition (ERRE) sequence, leading to their transcriptional activation in early G1 phase. Can coassemble on structured DNA elements with other transcription factors like SOX2, POU5F1, KDM1A and NCOA3 to trigger ESRRB-dependent gene activation. This mechanism, in the case of SOX2 corecruitment prevents the embryonic stem cells (ESCs) to epiblast stem cells (EpiSC) transition through positive regulation of NR0B1 that inhibits the EpiSC transcriptional program. Also plays a role inner ear development by controlling expression of ion channels and transporters and in early placentation. The protein is Steroid hormone receptor ERR2 of Rattus norvegicus (Rat).